A 255-amino-acid chain; its full sequence is Type III pantothenate kinase (255 aa).

6-13 serves as a coordination point for ATP; sequence DIGNSNIV. Residues tyrosine 100 and 107-110 each bind substrate; that span reads GSDR. Aspartate 109 serves as the catalytic Proton acceptor. Aspartate 129 contacts K(+). Threonine 132 is an ATP binding site. Threonine 184 contacts substrate.

Belongs to the type III pantothenate kinase family. In terms of assembly, homodimer. The cofactor is NH4(+). Requires K(+) as cofactor.

It localises to the cytoplasm. The enzyme catalyses (R)-pantothenate + ATP = (R)-4'-phosphopantothenate + ADP + H(+). Its pathway is cofactor biosynthesis; coenzyme A biosynthesis; CoA from (R)-pantothenate: step 1/5. Functionally, catalyzes the phosphorylation of pantothenate (Pan), the first step in CoA biosynthesis. The protein is Type III pantothenate kinase of Brevibacillus brevis (strain 47 / JCM 6285 / NBRC 100599).